We begin with the raw amino-acid sequence, 387 residues long: Cytochrome b (387 aa).

A run of 8 helical transmembrane segments spans residues 32–52, 76–98, 113–133, 179–199, 225–245, 290–310, 325–345, and 353–373; these read FGFF…LLAM, WLLR…VHML, LWVS…LGYV, FFSL…LHII, FTIK…AFVF, LGVL…FLTI, LFWS…QPAA, and LYST…IYMV. The heme b site is built by His82 and His96. Residues His183 and His197 each coordinate heme b.

The protein belongs to the cytochrome b family. The main subunits of complex b-c1 are: cytochrome b, cytochrome c1 and the Rieske protein. Heme b serves as cofactor.

The protein localises to the mitochondrion inner membrane. In terms of biological role, component of the ubiquinol-cytochrome c reductase complex (complex III or cytochrome b-c1 complex) that is part of the mitochondrial respiratory chain. The b-c1 complex mediates electron transfer from ubiquinol to cytochrome c. Contributes to the generation of a proton gradient across the mitochondrial membrane that is then used for ATP synthesis. This is Cytochrome b (cytB) from Dictyostelium citrinum (Slime mold).